The primary structure comprises 92 residues: PqqA binding protein (92 aa).

This sequence belongs to the PqqD family. In terms of assembly, monomer. Interacts with PqqE.

The protein operates within cofactor biosynthesis; pyrroloquinoline quinone biosynthesis. Functionally, functions as a PqqA binding protein and presents PqqA to PqqE, in the pyrroloquinoline quinone (PQQ) biosynthetic pathway. The protein is PqqA binding protein of Xanthomonas oryzae pv. oryzae (strain MAFF 311018).